The sequence spans 224 residues: Menaquinol:cytochrome c reductase cytochrome b subunit (224 aa).

The chain crosses the membrane as a helical span at residues 37–57 (FSAFVYCFGGLTFFVTVIQIL). Position 42 (Y42) interacts with heme b. C43 is a binding site for heme c. Heme b-binding residues include R91, H94, H108, and R111. 3 helical membrane-spanning segments follow: residues 96–116 (WGAS…FFQG), 126–146 (WIVG…GYLL), and 195–215 (IHVF…FLMI). Residues H196 and H211 each contribute to the heme b site. 2 residues coordinate heme c: R216 and I220. S221 serves as a coordination point for heme b.

This sequence belongs to the cytochrome b family. The main subunits of the menaquinol:cytochrome c complex are a Rieske-type iron-sulfur protein (QcrA), a cytochrome b (QcrB) and a cytochrome c (QcrC). Heme b serves as cofactor. Requires heme c as cofactor.

It is found in the cell membrane. Functionally, component of the menaquinol:cytochrome c reductase complex. In Geobacillus thermodenitrificans, this protein is Menaquinol:cytochrome c reductase cytochrome b subunit (qcrB).